Consider the following 149-residue polypeptide: UPF0178 protein Pmen_0294 (149 aa).

This sequence belongs to the UPF0178 family.

This chain is UPF0178 protein Pmen_0294, found in Ectopseudomonas mendocina (strain ymp) (Pseudomonas mendocina).